The chain runs to 461 residues: GTPase Der (461 aa).

EngA-type G domains are found at residues 2–164 (QSII…NENF) and 197–369 (IKVG…ANFT). GTP-binding positions include 8 to 15 (GKPNVGKS), 55 to 59 (DSGGL), 116 to 119 (NKID), 203 to 210 (GRVNVGKS), 250 to 254 (DTAGI), and 314 to 317 (NKWD). The region spanning 370–454 (QKIPTAKLNA…PLIIVSRKKG (85 aa)) is the KH-like domain.

This sequence belongs to the TRAFAC class TrmE-Era-EngA-EngB-Septin-like GTPase superfamily. EngA (Der) GTPase family. As to quaternary structure, associates with the 50S ribosomal subunit.

GTPase that plays an essential role in the late steps of ribosome biogenesis. In Campylobacter lari (strain RM2100 / D67 / ATCC BAA-1060), this protein is GTPase Der.